Here is a 502-residue protein sequence, read N- to C-terminus: Sporulation-specific protein 2 (502 aa).

An N-terminal signal peptide occupies residues 1–56; it reads MPIWKTQTFFTSISVIQIVNKETKVSTKKEKDSMLNQLNTILRFLFLFLQLIKSSA. Residues N77, N135, N285, N303, N340, N343, and N355 are each glycosylated (N-linked (GlcNAc...) asparagine). A disordered region spans residues 441 to 474; sequence EGNVLGKQETDNDNGKKEKGKNGAKSQGSSKKME. Over residues 448-461 the composition is skewed to basic and acidic residues; that stretch reads QETDNDNGKKEKGK. The GPI-anchor amidated asparagine moiety is linked to residue N475. Positions 476–502 are cleaved as a propeptide — removed in mature form; it reads SAPKNIFIDAFKMSVYAVFTVLFSIIF.

It belongs to the SPS2 family.

The protein localises to the cell membrane. Its function is as follows. Involved in middle stages of meiosis. Redundant with SPS22 for the organization of the beta-glucan layer of the spore wall. The protein is Sporulation-specific protein 2 (SPS2) of Saccharomyces cerevisiae (strain ATCC 204508 / S288c) (Baker's yeast).